We begin with the raw amino-acid sequence, 293 residues long: Ribonuclease H2 subunit B (293 aa).

Positions 251–278 (KRPQNSDITSSLLKKPNRKQATKKSKYF) are disordered. Residues 265–276 (KPNRKQATKKSK) are compositionally biased toward basic residues.

It belongs to the RNase H2 subunit B family. Component of the RNase H2 complex.

The protein resides in the nucleus. The protein localises to the cytoplasm. In terms of biological role, non catalytic subunit of RNase H2, an endonuclease that specifically degrades the RNA of RNA:DNA hybrids. Participates in DNA replication, possibly by mediating the removal of lagging-strand Okazaki fragment RNA primers during DNA replication. Mediates the excision of single ribonucleotides from DNA:RNA duplexes. This chain is Ribonuclease H2 subunit B (rnh202), found in Schizosaccharomyces pombe (strain 972 / ATCC 24843) (Fission yeast).